The following is a 305-amino-acid chain: Carbamate kinase (305 aa).

This sequence belongs to the carbamate kinase family.

It localises to the cytoplasm. The catalysed reaction is hydrogencarbonate + NH4(+) + ATP = carbamoyl phosphate + ADP + H2O + H(+). It functions in the pathway metabolic intermediate metabolism; carbamoyl phosphate degradation; CO(2) and NH(3) from carbamoyl phosphate: step 1/1. The polypeptide is Carbamate kinase (arcC) (Thermoplasma acidophilum (strain ATCC 25905 / DSM 1728 / JCM 9062 / NBRC 15155 / AMRC-C165)).